Consider the following 328-residue polypeptide: Carbonic anhydrase-related protein 11 (328 aa).

Positions 1–23 are cleaved as a signal peptide; it reads MGAAPRLSAPRVLVLWAALGAAA. The region spanning 33 to 303 is the Alpha-carbonic anhydrase domain; that stretch reads DWWSYKDNLQ…LAHRALRGNR (271 aa). Residue Asn118 is glycosylated (N-linked (GlcNAc...) asparagine). The segment at 300–328 is disordered; the sequence is RGNRDPRHPERRCRGPNYRLHVDDVPHGL. Residues 319–328 are compositionally biased toward basic and acidic residues; that stretch reads LHVDDVPHGL.

This sequence belongs to the alpha-carbonic anhydrase family.

The protein resides in the secreted. Functionally, does not have a catalytic activity. In Ovis aries (Sheep), this protein is Carbonic anhydrase-related protein 11 (CA11).